Consider the following 516-residue polypeptide: Probable rhamnogalacturonase B (516 aa).

A signal peptide spans methionine 1–alanine 21. Residues cysteine 42 and cysteine 68 are joined by a disulfide bond. Asparagine 145 carries an N-linked (GlcNAc...) asparagine glycan. The active-site Proton donor is the aspartate 219. A disulfide bridge connects residues cysteine 221 and cysteine 238. Asparagine 239 carries N-linked (GlcNAc...) asparagine glycosylation. Histidine 294 is a catalytic residue. An N-linked (GlcNAc...) asparagine glycan is attached at asparagine 321. Cystine bridges form between cysteine 344-cysteine 350 and cysteine 372-cysteine 381. The disordered stretch occupies residues glutamate 462–alanine 516. Positions arginine 469 to alanine 485 are enriched in polar residues. Over residues proline 502–alanine 516 the composition is skewed to basic residues.

This sequence belongs to the glycosyl hydrolase 28 family.

Its subcellular location is the secreted. It carries out the reaction Endohydrolysis of alpha-D-GalA-(1-&gt;2)-alpha-L-Rha glycosidic bond in the rhamnogalacturonan I backbone with initial inversion of anomeric configuration releasing oligosaccharides with beta-D-GalA at the reducing end.. In terms of biological role, pectinolytic enzymes consist of four classes of enzymes: pectine lyase, polygalacturonase, pectin methylesterase and rhamnogalacturonase. Hydrolyzes alpha-D-galacturonopyranosyl-(1,2)-alpha-L-rhamnopyranosyl linkages in the backbone of the hairy regions of pectins. This is Probable rhamnogalacturonase B (rhgB) from Neosartorya fischeri (strain ATCC 1020 / DSM 3700 / CBS 544.65 / FGSC A1164 / JCM 1740 / NRRL 181 / WB 181) (Aspergillus fischerianus).